The sequence spans 287 residues: ATP synthase gamma chain (287 aa).

Belongs to the ATPase gamma chain family. In terms of assembly, F-type ATPases have 2 components, CF(1) - the catalytic core - and CF(0) - the membrane proton channel. CF(1) has five subunits: alpha(3), beta(3), gamma(1), delta(1), epsilon(1). CF(0) has three main subunits: a, b and c.

The protein localises to the cell inner membrane. Its function is as follows. Produces ATP from ADP in the presence of a proton gradient across the membrane. The gamma chain is believed to be important in regulating ATPase activity and the flow of protons through the CF(0) complex. This is ATP synthase gamma chain from Colwellia psychrerythraea (strain 34H / ATCC BAA-681) (Vibrio psychroerythus).